Reading from the N-terminus, the 396-residue chain is Chalcone synthase (396 aa).

The active site involves Cys167.

It belongs to the thiolase-like superfamily. Chalcone/stilbene synthases family.

The catalysed reaction is (E)-4-coumaroyl-CoA + 3 malonyl-CoA + 3 H(+) = 2',4,4',6'-tetrahydroxychalcone + 3 CO2 + 4 CoA. The protein operates within secondary metabolite biosynthesis; flavonoid biosynthesis. Its function is as follows. The primary product of this enzyme is 4,2',4',6'-tetrahydroxychalcone (also termed naringenin-chalcone or chalcone) which can under specific conditions spontaneously isomerize into naringenin. This chain is Chalcone synthase (CHS), found in Chrysosplenium americanum (American golden saxifrage).